The chain runs to 364 residues: MEPRVSVAEAVSSLTIADAFVGACEGPAPPRPALPSRFICSFPDCSASYNKAWKLDAHLCKHTGERPFVCDYEGCGKAFIRDYHLSRHVLIHTGEKPFVCADDGCNQKFNTKSNLKKHIERKHGNPQKQYVCSYEGCKKAFKKHQQLRTHQCQHTSEPLFRCTHEGCGKHFASPSRLKRHGKVHEGYLCQKGCSFMGKTWTELLKHMREAHKEDITCNVCQRMFKRRDYLKQHMKTHAPERDVYRCPRQGCGRTYTTVFNLQSHILSFHEEKRPFVCEHAGCGKTFAMKQSLMRHSVVHDPDKKRMKLKVRAPRERRSLASRLSGYFPPKRKQEPDYSLPNASAESSSSPEAQLPPPAALLTVC.

9 consecutive C2H2-type zinc fingers follow at residues phenylalanine 38–histidine 62, phenylalanine 68–histidine 92, phenylalanine 98–histidine 123, tyrosine 130–histidine 154, phenylalanine 160–histidine 184, tyrosine 187–histidine 211, isoleucine 215–histidine 237, tyrosine 244–histidine 269, and phenylalanine 275–histidine 299. Residues histidine 299 to cysteine 364 are disordered. Positions serine 338–alanine 352 are enriched in low complexity.

Its subcellular location is the nucleus. In terms of biological role, involved in ribosomal large subunit biogenesis. Binds the approximately 50 base pairs internal control region (ICR) of 5S ribosomal RNA genes. It is required for their RNA polymerase III-dependent transcription and may also maintain the transcription of other genes. Also binds the transcribed 5S RNA's. The polypeptide is Transcription factor IIIA (Gtf3a) (Mus musculus (Mouse)).